We begin with the raw amino-acid sequence, 575 residues long: Chaperonin CPN60-1, mitochondrial (575 aa).

Residues 1 to 32 (MHRFATGLASKARLARNGANQIASRSNWRRNY) constitute a mitochondrion transit peptide.

The protein belongs to the chaperonin (HSP60) family.

The protein resides in the mitochondrion. Its function is as follows. Implicated in mitochondrial protein import and macromolecular assembly. May facilitate the correct folding of imported proteins. May also prevent misfolding and promote the refolding and proper assembly of unfolded polypeptides generated under stress conditions in the mitochondrial matrix. The protein is Chaperonin CPN60-1, mitochondrial (CPN60-1) of Cucurbita maxima (Pumpkin).